A 75-amino-acid polypeptide reads, in one-letter code: Exodeoxyribonuclease 7 small subunit (75 aa).

The protein belongs to the XseB family. Heterooligomer composed of large and small subunits.

Its subcellular location is the cytoplasm. The catalysed reaction is Exonucleolytic cleavage in either 5'- to 3'- or 3'- to 5'-direction to yield nucleoside 5'-phosphates.. Its function is as follows. Bidirectionally degrades single-stranded DNA into large acid-insoluble oligonucleotides, which are then degraded further into small acid-soluble oligonucleotides. This Chlamydia abortus (strain DSM 27085 / S26/3) (Chlamydophila abortus) protein is Exodeoxyribonuclease 7 small subunit.